Reading from the N-terminus, the 672-residue chain is Single-strand DNA endonuclease ASTE1 (672 aa).

The segment at 349-398 (TFLHTQVENMQRPNAHRISQPIRQIIYGLLLNGPSHAEDIAQNTLPSQLL) is interaction with SHLD2.

It belongs to the asteroid family. In terms of assembly, interacts with SHLD1, SHLD2, SHLD3, RIF1 and MAD2L2/REV7.

Structure-specific DNA endonuclease that specifically cleaves single-stranded DNA and 3' overhang DNA. Contributes to the control of DNA double-strand break repair choice by antagonizing BRCA1-dependent homologous recombination (HR) and promoting non-homologous end-joining (NHEJ). Recruited to the single-stranded DNA ends by SHLD2 and cleaves the 3' exposed DNA ends, therefore inhibiting DNA end resection (necessary for HR) and promoting DNA end protection (necessary for NHEJ). This is Single-strand DNA endonuclease ASTE1 (Aste1) from Mus musculus (Mouse).